A 288-amino-acid chain; its full sequence is UTP--glucose-1-phosphate uridylyltransferase (288 aa).

It belongs to the UDPGP type 2 family.

It carries out the reaction alpha-D-glucose 1-phosphate + UTP + H(+) = UDP-alpha-D-glucose + diphosphate. It functions in the pathway glycolipid metabolism; diglucosyl-diacylglycerol biosynthesis. In terms of biological role, catalyzes the formation of UDP-glucose from glucose-1-phosphate and UTP. This is an intermediate step in the biosynthesis of diglucosyl-diacylglycerol (Glc2-DAG), i.e. the predominant glycolipid found in the S.aureus membrane, which is also used as a membrane anchor for lipoteichoic acid (LTA). The chain is UTP--glucose-1-phosphate uridylyltransferase (gtaB) from Staphylococcus aureus (strain MSSA476).